The primary structure comprises 253 residues: uncharacterized protein (253 aa).

Positions 200–209 (TGREHAHKGP) are enriched in basic and acidic residues. 2 disordered regions span residues 200-225 (TGREHAHKGPELTTPDSGLPRPPNPA) and 234-253 (QHSPPLGTSTPSAVLLSAAT).

As to expression, most abundantly expressed in gastrointestinal tissues. Expressed at lower levels in kidney and placenta. Expressed in fetal brain, liver, placenta, kidney and lung.

This is an uncharacterized protein from Homo sapiens (Human).